Consider the following 331-residue polypeptide: Lipoyl synthase (331 aa).

Polar residues predominate over residues 1–14 (MSTQLDASQPSNDV). The interval 1-32 (MSTQLDASQPSNDVASPAAYDPTQKQKSQAKT) is disordered. Residues Cys78, Cys83, Cys89, Cys104, Cys108, Cys111, and Ser318 each contribute to the [4Fe-4S] cluster site. Residues 89–307 (CFGKGTATFM…EREAYAMGFS (219 aa)) enclose the Radical SAM core domain.

This sequence belongs to the radical SAM superfamily. Lipoyl synthase family. [4Fe-4S] cluster is required as a cofactor.

Its subcellular location is the cytoplasm. The catalysed reaction is [[Fe-S] cluster scaffold protein carrying a second [4Fe-4S](2+) cluster] + N(6)-octanoyl-L-lysyl-[protein] + 2 oxidized [2Fe-2S]-[ferredoxin] + 2 S-adenosyl-L-methionine + 4 H(+) = [[Fe-S] cluster scaffold protein] + N(6)-[(R)-dihydrolipoyl]-L-lysyl-[protein] + 4 Fe(3+) + 2 hydrogen sulfide + 2 5'-deoxyadenosine + 2 L-methionine + 2 reduced [2Fe-2S]-[ferredoxin]. Its pathway is protein modification; protein lipoylation via endogenous pathway; protein N(6)-(lipoyl)lysine from octanoyl-[acyl-carrier-protein]: step 2/2. In terms of biological role, catalyzes the radical-mediated insertion of two sulfur atoms into the C-6 and C-8 positions of the octanoyl moiety bound to the lipoyl domains of lipoate-dependent enzymes, thereby converting the octanoylated domains into lipoylated derivatives. The chain is Lipoyl synthase from Bordetella avium (strain 197N).